Here is a 468-residue protein sequence, read N- to C-terminus: Aldehyde dehydrogenase family 3 member B1 (468 aa).

Residue Met1 is modified to N-acetylmethionine. Residue Gly188–Gly193 coordinates NAD(+). Active-site residues include Glu210 and Cys244. 2 S-palmitoyl cysteine lipidation sites follow: Cys462 and Cys463. Cys465 is modified (cysteine methyl ester). A lipid anchor (S-geranylgeranyl cysteine) is attached at Cys465. Residues Thr466–Leu468 constitute a propeptide, removed in mature form.

This sequence belongs to the aldehyde dehydrogenase family. Dually lipidated in the C-terminus; prenylation occurs prior to, and is a prerequisite for palmitoylation. It is also required for activity towards long-chain substrates.

Its subcellular location is the cell membrane. The catalysed reaction is an aldehyde + NAD(+) + H2O = a carboxylate + NADH + 2 H(+). It carries out the reaction a long-chain fatty aldehyde + NAD(+) + H2O = a long-chain fatty acid + NADH + 2 H(+). It catalyses the reaction a medium-chain fatty aldehyde + NAD(+) + H2O = a medium-chain fatty acid + NADH + 2 H(+). The enzyme catalyses octanal + NAD(+) + H2O = octanoate + NADH + 2 H(+). The catalysed reaction is nonanal + NAD(+) + H2O = nonanoate + NADH + 2 H(+). It carries out the reaction hexadecanoate + NADH + 2 H(+) = hexadecanal + NAD(+) + H2O. It catalyses the reaction (2E)-octenal + NAD(+) + H2O = (2E)-octenoate + NADH + 2 H(+). The enzyme catalyses (E)-non-2-enal + NAD(+) + H2O = (E)-non-2-enoate + NADH + 2 H(+). The catalysed reaction is (E)-4-hydroxynon-2-enal + NAD(+) + H2O = (E)-4-hydroxynon-2-enoate + NADH + 2 H(+). It carries out the reaction (2E)-hexadecenal + NAD(+) + H2O = (E)-hexadec-2-enoate + NADH + 2 H(+). It catalyses the reaction benzaldehyde + NAD(+) + H2O = benzoate + NADH + 2 H(+). The enzyme catalyses an aldehyde + NADP(+) + H2O = a carboxylate + NADPH + 2 H(+). The catalysed reaction is a medium-chain fatty aldehyde + NADP(+) + H2O = a medium-chain fatty acid + NADPH + 2 H(+). It carries out the reaction hexanal + NADP(+) + H2O = hexanoate + NADPH + 2 H(+). It catalyses the reaction octanal + NADP(+) + H2O = octanoate + NADPH + 2 H(+). The enzyme catalyses nonanal + NADP(+) + H2O = nonanoate + NADPH + 2 H(+). The catalysed reaction is (2E)-octenal + NADP(+) + H2O = (2E)-octenoate + NADPH + 2 H(+). It carries out the reaction (E)-non-2-enal + NADP(+) + H2O = (E)-non-2-enoate + NADPH + 2 H(+). It catalyses the reaction (E)-4-hydroxynon-2-enal + NADP(+) + H2O = (E)-4-hydroxynon-2-enoate + NADPH + 2 H(+). The enzyme catalyses benzaldehyde + NADP(+) + H2O = benzoate + NADPH + 2 H(+). Its pathway is alcohol metabolism; ethanol degradation; acetate from ethanol: step 2/2. In terms of biological role, oxidizes medium and long chain saturated and unsaturated fatty aldehydes generated in the plasma membrane into non-toxic fatty acids. May have a protective role against the cytotoxicity induced by lipid peroxidation. Short-chain fatty aldehydes are not good substrates. Can use both NADP(+) and NAD(+) as electron acceptor in vitro, however in vivo preference will depend on their tissue levels. Low activity towards acetaldehyde and 3,4-dihydroxyphenylacetaldehyde. Able to metabolize aromatic aldehydes such as benzaldehyde to their acid form. The protein is Aldehyde dehydrogenase family 3 member B1 (Aldh3b1) of Rattus norvegicus (Rat).